The chain runs to 552 residues: MAGUK p55 subfamily member 2 (552 aa).

2 consecutive L27 domains span residues Ser-8 to Lys-59 and Leu-60 to Pro-118. Ser-42 is subject to Phosphoserine. A Phosphothreonine modification is found at Thr-117. Ser-121 is subject to Phosphoserine. The 80-residue stretch at Met-140 to Tyr-219 folds into the PDZ domain. In terms of domain architecture, SH3 spans Pro-225 to Lys-293. One can recognise a Guanylate kinase-like domain in the interval Arg-350–Glu-537.

It belongs to the MAGUK family. As to quaternary structure, can homomultimerise. Interacts with CACNG2. Interacts (via the SH3-Guanylate kinase-like sub-module) with DLG4/PSD95 and DLGAP1/GKAP. Interacts (via the PDZ domain) with CADM1 (via C-terminus). Interacts with KCNN2/SK2 (via N-terminal domain). Interacts with SRC. Phosphorylated by SRC. In terms of tissue distribution, expressed in pyramidal neurons of CA1 region of the hippocampus.

It is found in the cell projection. Its subcellular location is the dendrite. It localises to the postsynaptic density. The protein resides in the cytoplasm. The protein localises to the cytoskeleton. It is found in the membrane. Its function is as follows. Postsynaptic MAGUK scaffold protein that links CADM1 cell adhesion molecules to core components of the postsynaptic density. In CA1 pyramidal neurons, required for synaptic KCNN2-containing channel function and long-term potentiation expression. Seems to negatively regulate SRC function in epithelial cells. This is MAGUK p55 subfamily member 2 from Mus musculus (Mouse).